The primary structure comprises 216 residues: ATP-dependent Clp protease proteolytic subunit (216 aa).

Ser-101 serves as the catalytic Nucleophile. His-126 is a catalytic residue.

It belongs to the peptidase S14 family. In terms of assembly, component of the chloroplastic Clp protease core complex.

The protein localises to the plastid. Its subcellular location is the chloroplast stroma. The catalysed reaction is Hydrolysis of proteins to small peptides in the presence of ATP and magnesium. alpha-casein is the usual test substrate. In the absence of ATP, only oligopeptides shorter than five residues are hydrolyzed (such as succinyl-Leu-Tyr-|-NHMec, and Leu-Tyr-Leu-|-Tyr-Trp, in which cleavage of the -Tyr-|-Leu- and -Tyr-|-Trp bonds also occurs).. Its function is as follows. Cleaves peptides in various proteins in a process that requires ATP hydrolysis. Has a chymotrypsin-like activity. Plays a major role in the degradation of misfolded proteins. In Triticum aestivum (Wheat), this protein is ATP-dependent Clp protease proteolytic subunit.